The sequence spans 916 residues: Isoleucine--tRNA ligase (916 aa).

The 'HIGH' region motif lies at 57-67 (PYANGNLHMGH). Residue Glu554 participates in L-isoleucyl-5'-AMP binding. The short motif at 595 to 599 (KMSKS) is the 'KMSKS' region element. Lys598 is a binding site for ATP. Cys885, Cys888, Cys905, and Cys908 together coordinate Zn(2+).

This sequence belongs to the class-I aminoacyl-tRNA synthetase family. IleS type 1 subfamily. In terms of assembly, monomer. Zn(2+) serves as cofactor.

It is found in the cytoplasm. The catalysed reaction is tRNA(Ile) + L-isoleucine + ATP = L-isoleucyl-tRNA(Ile) + AMP + diphosphate. Functionally, catalyzes the attachment of isoleucine to tRNA(Ile). As IleRS can inadvertently accommodate and process structurally similar amino acids such as valine, to avoid such errors it has two additional distinct tRNA(Ile)-dependent editing activities. One activity is designated as 'pretransfer' editing and involves the hydrolysis of activated Val-AMP. The other activity is designated 'posttransfer' editing and involves deacylation of mischarged Val-tRNA(Ile). This is Isoleucine--tRNA ligase from Staphylococcus epidermidis (strain ATCC 12228 / FDA PCI 1200).